The primary structure comprises 1316 residues: DNA-directed RNA polymerase subunit beta' (1316 aa).

Residues C60, C62, C75, and C78 each coordinate Zn(2+). Mg(2+)-binding residues include D535, D537, and D539. Zn(2+)-binding residues include C891, C968, C975, and C978.

This sequence belongs to the RNA polymerase beta' chain family. In terms of assembly, the RNAP catalytic core consists of 2 alpha, 1 beta, 1 beta' and 1 omega subunit. When a sigma factor is associated with the core the holoenzyme is formed, which can initiate transcription. Mg(2+) is required as a cofactor. Zn(2+) serves as cofactor.

It carries out the reaction RNA(n) + a ribonucleoside 5'-triphosphate = RNA(n+1) + diphosphate. Its function is as follows. DNA-dependent RNA polymerase catalyzes the transcription of DNA into RNA using the four ribonucleoside triphosphates as substrates. The chain is DNA-directed RNA polymerase subunit beta' from Mycobacterium avium (strain 104).